Consider the following 193-residue polypeptide: Cell wall galactomannoprotein (193 aa).

The N-terminal stretch at 1-17 is a signal peptide; sequence MFFRILALLPLVFLVTA. Residues N38 and N173 are each glycosylated (N-linked (GlcNAc...) asparagine).

It belongs to the cell wall mannoprotein 1 family. In terms of processing, galactomannoprotein, glycosylated.

It is found in the secreted. The protein resides in the cell wall. In terms of biological role, constitutive protein of the cell wall. The protein is Cell wall galactomannoprotein of Armillaria ostoyae (Armillaria root rot fungus).